Reading from the N-terminus, the 219-residue chain is MEYLSNLDPSSLLRSVSNMSADLGRKVWTSAPPRQRPFRVCDNKRTTRKGLTAATRQELLDKALEALVLSGALTLVLEEDGTTVESEEFFQLLEDDTCLMVLELGQSWSPRRSGVLSYGLGQEKPKHSKDIARITFDVYKQSPRDLFGSLNIKATFYGLYSLSCDIQGLGPKKILRELLRWASSLLQGLGHMLLGISSTLRRAVEGTERWQRQGRLKPY.

The CIDE-N domain occupies Pro-33–Pro-110.

It belongs to the CIDE family. Interacts with DFFA. Interacts with DFFB; inhibited by DFFB. Interacts with APOB. Interacts with PREB/SEC12; facilitating loading of SCAP-SREBP into COPII vesicles.

The protein resides in the lipid droplet. Its subcellular location is the endoplasmic reticulum membrane. It localises to the golgi apparatus. It is found in the cytoplasmic vesicle. The protein localises to the COPI-coated vesicle. Lipid transferase specifically expressed in hepatocytes, which promotes unilocular lipid droplet formation by mediating lipid droplet fusion. Lipid droplet fusion promotes their enlargement, restricting lipolysis and favoring lipid storage. Localizes on the lipid droplet surface, at focal contact sites between lipid droplets, and mediates atypical lipid droplet fusion by promoting directional net neutral lipid transfer from the smaller to larger lipid droplets. The transfer direction may be driven by the internal pressure difference between the contacting lipid droplet pair. Promotes lipid exchange and lipid droplet fusion in both small and large lipid droplet-containing hepatocytes. In addition to its role in lipid droplet fusion, also involved in cytoplasmic vesicle biogenesis and transport. Required for very-low-density lipoprotein (VLDL) lipidation and maturation. Probably involved in the biogenesis of VLDL transport vesicles by forming a COPII vesicle coat and facilitating the formation of endoplasmic reticulum-derived large vesicles. Also involved in sterol-regulated export of the SCAP-SREBP complex, composed of SCAP, SREBF1/SREBP1 and SREBF2/SREBP2, by promoting loading of SCAP-SREBP into COPII vesicles. May also activate apoptosis. The polypeptide is Lipid transferase CIDEB (CIDEB) (Bos taurus (Bovine)).